The primary structure comprises 354 residues: Peptide chain release factor 1 (354 aa).

Gln-231 is modified (N5-methylglutamine). Residues 284 to 304 are compositionally biased toward basic and acidic residues; it reads EALAKDRKEQVGSGDRSERIR. A disordered region spans residues 284–308; sequence EALAKDRKEQVGSGDRSERIRTYNF.

This sequence belongs to the prokaryotic/mitochondrial release factor family. In terms of processing, methylated by PrmC. Methylation increases the termination efficiency of RF1.

It is found in the cytoplasm. In terms of biological role, peptide chain release factor 1 directs the termination of translation in response to the peptide chain termination codons UAG and UAA. This is Peptide chain release factor 1 from Nitratiruptor sp. (strain SB155-2).